We begin with the raw amino-acid sequence, 241 residues long: Chloride intracellular channel protein 1 (241 aa).

N-acetylalanine is present on Ala-2. The interval 2–90 (AEEQPQVELF…EEFLEAVLCP (89 aa)) is required for insertion into the membrane. Lys-13 is modified (N6-acetyllysine). Residue Cys-24 participates in glutathione binding. Cys-24 bears the S-glutathionyl cysteine; alternate mark. Positions 24 to 27 (CPFS) match the G-site motif. A disulfide bridge links Cys-24 with Cys-59. A helical membrane pass occupies residues 26 to 46 (FSQRLFMVLWLKGVTFNVTTV). Glutathione is bound by residues Leu-64 and Thr-77. The region spanning 93–233 (YPKLAALNPE…PDDEEIELAY (141 aa)) is the GST C-terminal domain. An N6-acetyllysine modification is found at Lys-119. Ser-121 bears the Phosphoserine mark. Lys-131 is subject to N6-acetyllysine. Residues Ser-156 and Ser-211 each carry the phosphoserine modification. Residue Tyr-233 is modified to Phosphotyrosine.

It belongs to the chloride channel CLIC family. As to quaternary structure, monomer. Homodimer (in vitro). Interacts with TRAPPC2. Dimerization requires a conformation change that leads to the exposure of a large hydrophobic surface. In vivo, this may lead to membrane insertion. Interacts with AKAP9. In terms of processing, hydrogen peroxide treatment causes a conformation change, leading to dimerization and formation of an intramolecular disulfide bond between Cys-24 and Cys-59. As to expression, expression is prominent in heart, placenta, liver, kidney and pancreas.

It localises to the nucleus. Its subcellular location is the nucleus membrane. The protein localises to the cytoplasm. The protein resides in the cell membrane. It is found in the endoplasmic reticulum. The catalysed reaction is L-dehydroascorbate + 2 glutathione = glutathione disulfide + L-ascorbate. It catalyses the reaction chloride(in) = chloride(out). The enzyme catalyses iodide(out) = iodide(in). It carries out the reaction thiocyanate(in) = thiocyanate(out). The catalysed reaction is nitrate(in) = nitrate(out). It catalyses the reaction bromide(in) = bromide(out). The enzyme catalyses fluoride(in) = fluoride(out). The oxidoreductase activity is inhibited by rapamycin, amphotericin B and IAA-94. The channel conductance is regulated by pH and redox membrane potential. Inhibited by IAA-94. In the soluble state, catalyzes glutaredoxin-like thiol disulfide exchange reactions with reduced glutathione as electron donor. Reduces selenite and dehydroascorbate and may act as an antioxidant during oxidative stress response. Can insert into membranes and form voltage-dependent multi-ion conductive channels. Membrane insertion seems to be redox-regulated and may occur only under oxidizing conditions. Involved in regulation of the cell cycle. The sequence is that of Chloride intracellular channel protein 1 from Homo sapiens (Human).